Here is a 356-residue protein sequence, read N- to C-terminus: GTPase Obg (356 aa).

An Obg domain is found at 1-158 (MFIDSVKITL…RLVRLELKLI (158 aa)). The OBG-type G domain occupies 159 to 339 (ADVGLVGFPN…LKFMLLEEIK (181 aa)). GTP contacts are provided by residues 165 to 172 (GFPNVGKS), 190 to 194 (FTTLT), 212 to 215 (DIPG), 280 to 283 (SKSD), and 320 to 322 (SSL). Mg(2+)-binding residues include S172 and T192.

The protein belongs to the TRAFAC class OBG-HflX-like GTPase superfamily. OBG GTPase family. Monomer. Mg(2+) is required as a cofactor.

It localises to the cytoplasm. Functionally, an essential GTPase which binds GTP, GDP and possibly (p)ppGpp with moderate affinity, with high nucleotide exchange rates and a fairly low GTP hydrolysis rate. Plays a role in control of the cell cycle, stress response, ribosome biogenesis and in those bacteria that undergo differentiation, in morphogenesis control. The protein is GTPase Obg of Campylobacter jejuni subsp. jejuni serotype O:23/36 (strain 81-176).